The primary structure comprises 248 residues: Anamorsin homolog (248 aa).

Positions 4–130 are N-terminal SAM-like domain; sequence FKGLQKSLYI…ETGSSARLSF (127 aa). The interval 131 to 161 is linker; the sequence is AKKTSSVNVWKISGDDEELIDEEELLDEEDK. 4 residues coordinate [2Fe-2S] cluster: Cys172, Cys181, Cys184, and Cys186. The tract at residues 172-186 is fe-S binding site A; the sequence is CSTTGKRKACKNCSC. [4Fe-4S] cluster contacts are provided by Cys209, Cys212, Cys220, and Cys223. 2 short sequence motifs (cx2C motif) span residues 209 to 212 and 220 to 223; these read CGNC and CSTC. Positions 209–223 are fe-S binding site B; the sequence is CGNCYLGDAFRCSTC.

It belongs to the anamorsin family. Monomer. [2Fe-2S] cluster serves as cofactor. Requires [4Fe-4S] cluster as cofactor.

It localises to the cytoplasm. The protein localises to the mitochondrion intermembrane space. Functionally, component of the cytosolic iron-sulfur (Fe-S) protein assembly (CIA) machinery. Required for the maturation of extramitochondrial Fe-S proteins. Part of an electron transfer chain functioning in an early step of cytosolic Fe-S biogenesis, facilitating the de novo assembly of a [4Fe-4S] cluster on the cytosolic Fe-S scaffold complex. Electrons are transferred from NADPH via a FAD- and FMN-containing diflavin oxidoreductase. Together with the diflavin oxidoreductase, also required for the assembly of the diferric tyrosyl radical cofactor of ribonucleotide reductase (RNR), probably by providing electrons for reduction during radical cofactor maturation in the catalytic small subunit. This chain is Anamorsin homolog, found in Drosophila virilis (Fruit fly).